A 154-amino-acid polypeptide reads, in one-letter code: MKKEQLVADLEALCAPIVKEKGYDLYHIEYVKENNEYYLRLYIEKPEERISLRDCEIVSRALSDMLDIEDPIKDAYFLEVSSPGLNRRLHSDEHFNRFIGKEVFVGFKSSLSGRKNVKGILKDVQENEIIVECEGNEIKVPKDKIKTANLEGEI.

The protein belongs to the RimP family.

It localises to the cytoplasm. Required for maturation of 30S ribosomal subunits. This is Ribosome maturation factor RimP from Clostridium perfringens (strain ATCC 13124 / DSM 756 / JCM 1290 / NCIMB 6125 / NCTC 8237 / Type A).